Consider the following 63-residue polypeptide: Hyphancin-3F (63 aa).

Residues 1 to 22 (MNFSRILFFVFACFVALASVSA) form the signal peptide. Residues 23–26 (APEP) constitute a propeptide, removed by a dipeptidylpeptidase. L61 is subject to Leucine amide.

This sequence belongs to the cecropin family.

Its subcellular location is the secreted. Its function is as follows. Has antibacterial activity. This Hyphantria cunea (Fall webworm moth) protein is Hyphancin-3F.